Consider the following 480-residue polypeptide: Uridine/deoxyuridine transporter (480 aa).

Transmembrane regions (helical) follow at residues 14 to 34 (VGSI…FQLN), 55 to 75 (SIAL…LFLP), 93 to 113 (LTMI…LMIG), 115 to 135 (ILQG…HVKV), 147 to 167 (ILTS…GWLV), 174 to 194 (SVFF…SFGT), 207 to 227 (WTGV…VNAL), 239 to 259 (WLLA…FWQV), 280 to 300 (GLLI…NGII), 320 to 340 (LVTL…SGFL), 358 to 378 (IIGI…LLLL), 382 to 402 (FIGI…GIVL), 417 to 437 (GMFN…PTVL), and 449 to 469 (ISGI…SFLI).

The protein belongs to the major facilitator superfamily. EmrB family.

Its subcellular location is the cell membrane. Functionally, responsible for the uptake of uridine and deoxyuridine. Not involved in purine nucleoside uptake. In Lactococcus lactis subsp. cremoris (strain MG1363), this protein is Uridine/deoxyuridine transporter.